A 436-amino-acid chain; its full sequence is GTPase Obg (436 aa).

One can recognise an Obg domain in the interval 2 to 160; the sequence is SMFLDTAKIK…RELQLELKIL (159 aa). The region spanning 161 to 338 is the OBG-type G domain; it reads ADVGLVGFPS…LLDATAELLD (178 aa). GTP is bound by residues 167–174, 192–196, 214–217, 284–287, and 319–321; these read GFPSVGKS, FTTIV, DLPG, NKMD, and SGL. Mg(2+)-binding residues include Ser174 and Thr194. The OCT domain maps to 358-436; sequence GFDEEEKAFE…IGKFEFEFVD (79 aa).

This sequence belongs to the TRAFAC class OBG-HflX-like GTPase superfamily. OBG GTPase family. Monomer. Mg(2+) serves as cofactor.

It localises to the cytoplasm. In terms of biological role, an essential GTPase which binds GTP, GDP and possibly (p)ppGpp with moderate affinity, with high nucleotide exchange rates and a fairly low GTP hydrolysis rate. Plays a role in control of the cell cycle, stress response, ribosome biogenesis and in those bacteria that undergo differentiation, in morphogenesis control. This is GTPase Obg from Streptococcus pneumoniae (strain CGSP14).